We begin with the raw amino-acid sequence, 406 residues long: Probable 2,3-bisphosphoglycerate-independent phosphoglycerate mutase (406 aa).

Belongs to the BPG-independent phosphoglycerate mutase family. A-PGAM subfamily.

The catalysed reaction is (2R)-2-phosphoglycerate = (2R)-3-phosphoglycerate. The protein operates within carbohydrate degradation; glycolysis; pyruvate from D-glyceraldehyde 3-phosphate: step 3/5. Catalyzes the interconversion of 2-phosphoglycerate and 3-phosphoglycerate. This Thermus thermophilus (strain ATCC 27634 / DSM 579 / HB8) protein is Probable 2,3-bisphosphoglycerate-independent phosphoglycerate mutase.